The sequence spans 469 residues: Transcription factor E2FB (469 aa).

Disordered stretches follow at residues 1–28 and 84–118; these read MSEE…PPLV and QTPV…AGSP. Polar residues-rich tracts occupy residues 8–22 and 100–118; these read QFPS…SLSS and SAKS…AGSP. The DNA-binding element occupies 129 to 194; the sequence is RYDSSLGLLT…TLKNRIQWKG (66 aa). The stretch at 202–246 forms a coiled coil; the sequence is ETIESIANLQDEVQNLAAEEARLDDQIRESQERLTSLSEDENNKR. The interval 210–238 is leucine-zipper; it reads LQDEVQNLAAEEARLDDQIRESQERLTSL. The segment at 319–374 is disordered; that stretch reads PQADEPSNVPDEPSNVPDVPSNLPSTSGLPENHDVSMPMKEESTERNMETQEVDDT. Residues 349-374 show a composition bias toward basic and acidic residues; it reads ENHDVSMPMKEESTERNMETQEVDDT. Residues 403 to 419 are retinoblastoma protein binding; it reads DYWFRSEVGEVSITDMW. The segment at 426-469 is disordered; it reads DWNQMITFDQDHAGPSDNKILEQPQTPSSPTPEESTATRSPTGS. Over residues 447–469 the composition is skewed to low complexity; the sequence is EQPQTPSSPTPEESTATRSPTGS.

The protein belongs to the E2F/DP family. Heterodimer with DP proteins. Interacts (via dimerization domain) preferentially with DPA, but also with DPB. Interacts with PURA1 and retinoblastoma-related protein RBR1. Component of a DREAM-like complex which modulates a variety of developmentally regulated genes and of the mitotic genes in proliferating and differentiated cells. Interacts with MYB3R4 only at early stages of leaves development. Post-translationally, phosphorylated. As to expression, expressed in proliferating cells and several differentiated tissues. Detected in inflorescence and shoot apical meristems, cotyledonary vascular tissues, leaf primordia, young leaves, base of trichomes, central cylinder and elongation zone of roots, lateral root primordia, flowers, pistils of immature flowers and pollen grains.

Its subcellular location is the cytoplasm. It localises to the nucleus. Its function is as follows. Transcription activator that binds DNA cooperatively with DP proteins through the E2 recognition site, 5'-TTTC[CG]CGC-3' found in the promoter region of a number of genes whose products are involved in cell cycle regulation or in DNA replication. The binding of retinoblastoma-related proteins represses transactivation. Involved in the control of cell-cycle progression from G1 to S phase and from G2 to M phase. Stimulates cell proliferation and delays differentiation. Represses cell enlargement and endoreduplication in auxin-free conditions. The polypeptide is Transcription factor E2FB (E2FB) (Arabidopsis thaliana (Mouse-ear cress)).